The sequence spans 254 residues: MSYDRAITVFSPDGHLFQVEYAQEAVKKGSTAVGVRGRDIVVLGVEKKSVAKLQDERTVRKICALDDNVCMAFAVVASVSGLTADARIVINRARVECQSHRLTVGDPVTVEYITRYIASLKQRYTQSNGRRPFGISALIVGFDFDGTPRLYQTDPSGTYHAWKANAIGRGAKSVREFLEKNYTDDAIETDDLTIKLVIKALLEVVQSGGKNIELAVMRRDQPLKILSPEEIEKYVAEIEKEKEENEKKKQKKAS.

O-linked (GlcNAc) serine glycosylation is present at serine 136. A Phosphotyrosine modification is found at tyrosine 159. Lysine 233 is modified (N6-acetyllysine).

It belongs to the peptidase T1A family. The 26S proteasome consists of a 20S proteasome core and two 19S regulatory subunits. The 20S proteasome core is a barrel-shaped complex made of 28 subunits that are arranged in four stacked rings. The two outer rings are each formed by seven alpha subunits, and the two inner rings are formed by seven beta subunits. The proteolytic activity is exerted by three beta-subunits PSMB5, PSMB6 and PSMB7. PSMA7 interacts directly with the PSMG1-PSMG2 heterodimer which promotes 20S proteasome assembly. Interacts with HIF1A. Interacts with RAB7A. Interacts with PRKN. Interacts with ABL1 and ABL2. Interacts with EMAP2. Interacts with MAVS. In terms of tissue distribution, ubiquitous.

It is found in the cytoplasm. It localises to the nucleus. Its function is as follows. Component of the 20S core proteasome complex involved in the proteolytic degradation of most intracellular proteins. This complex plays numerous essential roles within the cell by associating with different regulatory particles. Associated with two 19S regulatory particles, forms the 26S proteasome and thus participates in the ATP-dependent degradation of ubiquitinated proteins. The 26S proteasome plays a key role in the maintenance of protein homeostasis by removing misfolded or damaged proteins that could impair cellular functions, and by removing proteins whose functions are no longer required. Associated with the PA200 or PA28, the 20S proteasome mediates ubiquitin-independent protein degradation. This type of proteolysis is required in several pathways including spermatogenesis (20S-PA200 complex) or generation of a subset of MHC class I-presented antigenic peptides (20S-PA28 complex). Inhibits the transactivation function of HIF-1A under both normoxic and hypoxia-mimicking conditions. The interaction with EMAP2 increases the proteasome-mediated HIF-1A degradation under the hypoxic conditions. Plays a role in hepatitis C virus internal ribosome entry site-mediated translation. Mediates nuclear translocation of the androgen receptor (AR) and thereby enhances androgen-mediated transactivation. Promotes MAVS degradation and thereby negatively regulates MAVS-mediated innate immune response. This chain is Proteasome subunit alpha type-7 (Psma7), found in Rattus norvegicus (Rat).